A 300-amino-acid chain; its full sequence is NAD kinase (300 aa).

Residue D75 is the Proton acceptor of the active site. NAD(+) contacts are provided by residues 75 to 76 (DG), 149 to 150 (ND), R177, D179, 190 to 195 (TAYALS), A214, and Q248.

This sequence belongs to the NAD kinase family. The cofactor is a divalent metal cation.

The protein resides in the cytoplasm. It catalyses the reaction NAD(+) + ATP = ADP + NADP(+) + H(+). Functionally, involved in the regulation of the intracellular balance of NAD and NADP, and is a key enzyme in the biosynthesis of NADP. Catalyzes specifically the phosphorylation on 2'-hydroxyl of the adenosine moiety of NAD to yield NADP. The sequence is that of NAD kinase from Burkholderia cenocepacia (strain ATCC BAA-245 / DSM 16553 / LMG 16656 / NCTC 13227 / J2315 / CF5610) (Burkholderia cepacia (strain J2315)).